The sequence spans 96 residues: Phosphoribosyl-ATP pyrophosphatase (96 aa).

The protein belongs to the PRA-PH family.

The protein localises to the cytoplasm. It catalyses the reaction 1-(5-phospho-beta-D-ribosyl)-ATP + H2O = 1-(5-phospho-beta-D-ribosyl)-5'-AMP + diphosphate + H(+). It functions in the pathway amino-acid biosynthesis; L-histidine biosynthesis; L-histidine from 5-phospho-alpha-D-ribose 1-diphosphate: step 2/9. The sequence is that of Phosphoribosyl-ATP pyrophosphatase from Methanococcus aeolicus (strain ATCC BAA-1280 / DSM 17508 / OCM 812 / Nankai-3).